Reading from the N-terminus, the 364-residue chain is Valine dehydrogenase (364 aa).

Lysine 91 is a catalytic residue. 191 to 197 is a binding site for NAD(+); the sequence is GVGKVGH.

This sequence belongs to the Glu/Leu/Phe/Val dehydrogenases family. Homodimer.

The protein localises to the cytoplasm. It carries out the reaction L-valine + NAD(+) + H2O = 3-methyl-2-oxobutanoate + NH4(+) + NADH + H(+). Its pathway is amino-acid degradation; L-valine degradation. Repressed in minimal medium by the presence of glucose and NH4(+), glycerol and NH4(+), or glycerol and asparagine. In terms of biological role, oxidative deamination of branched-chain amino acids. Oxidizes L-valine and L-alpha-aminobutyric acid efficiently, and L-isoleucine and L-leucine less efficiently. Does not act on D-valine. The catabolism of L-valine is the major source of fatty acid precursors for macrolide biosynthesis and a vital source of antibiotic precursors. Uses NAD; no activity was found with NADP. This chain is Valine dehydrogenase (vdh), found in Streptomyces coelicolor (strain ATCC BAA-471 / A3(2) / M145).